The chain runs to 377 residues: Anhydro-N-acetylmuramic acid kinase (377 aa).

18–25 serves as a coordination point for ATP; the sequence is GTSADGID.

It belongs to the anhydro-N-acetylmuramic acid kinase family.

It catalyses the reaction 1,6-anhydro-N-acetyl-beta-muramate + ATP + H2O = N-acetyl-D-muramate 6-phosphate + ADP + H(+). Its pathway is amino-sugar metabolism; 1,6-anhydro-N-acetylmuramate degradation. The protein operates within cell wall biogenesis; peptidoglycan recycling. Catalyzes the specific phosphorylation of 1,6-anhydro-N-acetylmuramic acid (anhMurNAc) with the simultaneous cleavage of the 1,6-anhydro ring, generating MurNAc-6-P. Is required for the utilization of anhMurNAc either imported from the medium or derived from its own cell wall murein, and thus plays a role in cell wall recycling. This is Anhydro-N-acetylmuramic acid kinase from Xanthomonas oryzae pv. oryzae (strain MAFF 311018).